Consider the following 157-residue polypeptide: SsrA-binding protein (157 aa).

It belongs to the SmpB family.

It localises to the cytoplasm. Required for rescue of stalled ribosomes mediated by trans-translation. Binds to transfer-messenger RNA (tmRNA), required for stable association of tmRNA with ribosomes. tmRNA and SmpB together mimic tRNA shape, replacing the anticodon stem-loop with SmpB. tmRNA is encoded by the ssrA gene; the 2 termini fold to resemble tRNA(Ala) and it encodes a 'tag peptide', a short internal open reading frame. During trans-translation Ala-aminoacylated tmRNA acts like a tRNA, entering the A-site of stalled ribosomes, displacing the stalled mRNA. The ribosome then switches to translate the ORF on the tmRNA; the nascent peptide is terminated with the 'tag peptide' encoded by the tmRNA and targeted for degradation. The ribosome is freed to recommence translation, which seems to be the essential function of trans-translation. The chain is SsrA-binding protein from Limosilactobacillus fermentum (strain NBRC 3956 / LMG 18251) (Lactobacillus fermentum).